We begin with the raw amino-acid sequence, 792 residues long: Probable exo-1,4-beta-xylosidase xlnD (792 aa).

The first 20 residues, 1–20 (MSVAKSIAAVLVALLPGALA), serve as a signal peptide directing secretion. Residues Asn-23, Asn-87, Asn-118, Asn-142, and Asn-246 are each glycosylated (N-linked (GlcNAc...) asparagine). Residue Asp-310 is part of the active site. 8 N-linked (GlcNAc...) asparagine glycosylation sites follow: Asn-326, Asn-385, Asn-404, Asn-440, Asn-477, Asn-518, Asn-679, and Asn-701.

The protein belongs to the glycosyl hydrolase 3 family.

It localises to the secreted. It carries out the reaction Hydrolysis of (1-&gt;4)-beta-D-xylans, to remove successive D-xylose residues from the non-reducing termini.. It participates in glycan degradation; xylan degradation. Its function is as follows. Xylan 1,4-beta-xylosidase involved in the hydrolysis of xylan, a major structural heterogeneous polysaccharide found in plant biomass representing the second most abundant polysaccharide in the biosphere, after cellulose. In Aspergillus fumigatus (strain CBS 144.89 / FGSC A1163 / CEA10) (Neosartorya fumigata), this protein is Probable exo-1,4-beta-xylosidase xlnD (xlnD).